A 417-amino-acid polypeptide reads, in one-letter code: Histidine--tRNA ligase (417 aa).

It belongs to the class-II aminoacyl-tRNA synthetase family. As to quaternary structure, homodimer.

Its subcellular location is the cytoplasm. The enzyme catalyses tRNA(His) + L-histidine + ATP = L-histidyl-tRNA(His) + AMP + diphosphate + H(+). The chain is Histidine--tRNA ligase from Nitratidesulfovibrio vulgaris (strain DP4) (Desulfovibrio vulgaris).